Consider the following 533-residue polypeptide: Apolipoprotein N-acyltransferase (533 aa).

6 consecutive transmembrane segments (helical) span residues 17 to 37 (ALLA…FGFF), 74 to 94 (WLFG…ALLI), 105 to 125 (LAIL…AVLA), 127 to 147 (LLWS…GLLE), 178 to 198 (VIGV…PALL), and 205 to 225 (VPGI…GYYA). Residues 245–495 (VQPAIDQEAK…QGFVDSTLSG (251 aa)) form the CN hydrolase domain. The active-site Proton acceptor is the E290. The active site involves K354. C407 serves as the catalytic Nucleophile. A helical membrane pass occupies residues 509–529 (YFWLIIGIVGMIAVISRMGFI).

It belongs to the CN hydrolase family. Apolipoprotein N-acyltransferase subfamily.

The protein localises to the cell inner membrane. It catalyses the reaction N-terminal S-1,2-diacyl-sn-glyceryl-L-cysteinyl-[lipoprotein] + a glycerophospholipid = N-acyl-S-1,2-diacyl-sn-glyceryl-L-cysteinyl-[lipoprotein] + a 2-acyl-sn-glycero-3-phospholipid + H(+). The protein operates within protein modification; lipoprotein biosynthesis (N-acyl transfer). Its function is as follows. Catalyzes the phospholipid dependent N-acylation of the N-terminal cysteine of apolipoprotein, the last step in lipoprotein maturation. In Rhizobium rhizogenes (strain K84 / ATCC BAA-868) (Agrobacterium radiobacter), this protein is Apolipoprotein N-acyltransferase.